A 475-amino-acid chain; its full sequence is ATP synthase subunit beta 1 (475 aa).

152–159 is a binding site for ATP; the sequence is GGAGVGKT.

It belongs to the ATPase alpha/beta chains family. In terms of assembly, F-type ATPases have 2 components, CF(1) - the catalytic core - and CF(0) - the membrane proton channel. CF(1) has five subunits: alpha(3), beta(3), gamma(1), delta(1), epsilon(1). CF(0) has four main subunits: a(1), b(1), b'(1) and c(9-12).

It localises to the cell inner membrane. The catalysed reaction is ATP + H2O + 4 H(+)(in) = ADP + phosphate + 5 H(+)(out). In terms of biological role, produces ATP from ADP in the presence of a proton gradient across the membrane. The catalytic sites are hosted primarily by the beta subunits. In Cereibacter sphaeroides (strain ATCC 17029 / ATH 2.4.9) (Rhodobacter sphaeroides), this protein is ATP synthase subunit beta 1.